Here is an 81-residue protein sequence, read N- to C-terminus: UPF0410 protein YwzA (81 aa).

Helical transmembrane passes span 1-21 (MSFL…SLFV), 27-47 (GGII…HGLL), and 56-76 (GFAI…VSLL).

Belongs to the UPF0410 family.

The protein resides in the cell membrane. This Bacillus subtilis (strain 168) protein is UPF0410 protein YwzA (ywzA).